A 782-amino-acid polypeptide reads, in one-letter code: MSTLKLIPFSTSIDKQFSGRTSILGGKCCLQIDGPKTTKKQSKILVEKIRERISNGKVVEISASAYDTAWVAMVPSREMSGRPSFPECLDWIVENQNPDGSWGLNPFLVKDSLSCTLACLLALRKWGLPNHLLHKGIEFIESNISRAATDDENQVAPIGFNIIFPAMISYAKELDLTLTLPPSSLNALLRARDSEMIRREGKWEYVGEGLGDSCNWNQIIQKHQSRNGSLFNSPATTAAAAIHCRDHKCFDYLISVVNKCNGWAPTVYPMDIYARLCMIDTLQRLGIDCHFRVELDAIFDEIYRNWQEREEEIFSDVTCQALAFRLLRVKGYDVSSDGLEEFVEQEGFFNSVSMQHSNVGTVLELYRASQTRINEEENTLQKIHAWTKPFLTQQLLNKTIRHKPLQMQVEYDLKNFYGTVDRFQHRRTIDLYDAQASQILKTAYRCSAIHNEDFIRFSVQNFKICRAEYQKELDEINKWYAYFGMDLLSKGRNACEQAYVVTAGLIADVELSMARISFAQVILLITVFDDVFDRYGTREEALAVIHLIKEILTHYRWKAAPKECSQLVKTTFTALYDTVNETAAKAHALQGFCFKQQIISLWEELLECAVREKESLSGKNVSTLDEYLSFAPVTIGCELCVLTAVHFLGIQVSEEMLTSAEMLTLCWHGNVVCRLLNDLKTYSREREEKTVNSVSVQVGVSEEEAVAKVKEVLEYHRRKVVEMVYQSQGSNVPRECKELVWKTCKVAHCFYGYDGDEFSSPRDIVDDIKAMMFLGLPHLSTH.

4 residues coordinate Mg(2+): Asp-529, Asp-533, Asn-677, and Glu-685. The short motif at 529-533 (DDVFD) is the DDXXD motif element.

Belongs to the terpene synthase family. Mg(2+) serves as cofactor. In terms of tissue distribution, highly expressed in leaves, and, at low levels, in stems, but barely in roots and flowers.

The catalysed reaction is (+)-copalyl diphosphate = miltiradiene + diphosphate. It carries out the reaction (+)-copalyl diphosphate + H2O = nezukol + diphosphate. It functions in the pathway secondary metabolite biosynthesis; terpenoid biosynthesis. Involved in the biosynthesis of ent-kaurene diterpenoids natural products such as oridonin, miltiradiene, eriocalyxin B and nezukol, known to exhibit antitumor, anti-inflammatory and antibacterial activities. Catalyzes the conversion of (+)-copalyl diphosphate ((+)-CPP) to nezukol and miltiradiene. The reaction mechanism proceeds via the ionization of the diphosphate group of (+)-CPP, followed by formation of an intermediary pimar-15-en-8-yl(+) carbocation and neutralization of the carbocation by water capture at C-8 to yield nezukol. Can interact with ent-copalyl diphosphate (ent-CPP) but seems unable to use it as substrate. In Isodon rubescens (Rabdosia rubescens), this protein is Nezukol synthase KSL3.